Here is a 448-residue protein sequence, read N- to C-terminus: Nucleoprotein (448 aa).

The disordered stretch occupies residues 1–55 (MSFTPGKQSSSRASSGNRSGNGILKWADQSDQSRNVQTRGRRAQPKQTATSQQPS). Positions 9–22 (SSSRASSGNRSGNG) are enriched in low complexity. 2 stretches are compositionally biased toward polar residues: residues 29–38 (QSDQSRNVQT) and 45–55 (PKQTATSQQPS). Positions 52–194 (QQPSAGNVVP…GYYIEGSGRS (143 aa)) are RNA-binding. Residues 61-190 (PYYSWFSGIT…VLPQGYYIEG (130 aa)) form the CoV N NTD domain. Positions 106, 122, and 164 each coordinate RNA. 3 disordered regions span residues 157–231 (TPAD…VTPD), 266–298 (ILNK…FGGG), and 385–448 (GMMN…TSEI). Phosphoserine; by host is present on serine 167. At threonine 174 the chain carries Phosphothreonine; by host. At serine 191 the chain carries Phosphoserine; by host. A compositionally biased stretch (low complexity) spans 193 to 223 (RSAPNSRSTSRTSSRASSAGSRSRANSGNRT). In terms of domain architecture, CoV N CTD spans 259-384 (AKEIRQKILN…ENLNAYQQQD (126 aa)). Residues 266 to 276 (ILNKPRQKRSP) are compositionally biased toward basic residues. The interval 266-384 (ILNKPRQKRS…ENLNAYQQQD (119 aa)) is dimerization. Serine 390 is subject to Phosphoserine; by host. Residues 399-409 (QKNGQGENDNI) are compositionally biased toward polar residues. Basic and acidic residues predominate over residues 422–439 (KSRELTAEDISLLKKMDE). Serine 423 is modified (phosphoserine; by host). At threonine 427 the chain carries Phosphothreonine; by host.

It belongs to the betacoronavirus nucleocapsid protein family. In terms of assembly, homooligomer. Both monomeric and oligomeric forms interact with RNA. Interacts with protein M. Interacts with NSP3; this interaction serves to tether the genome to the newly translated replicase-transcriptase complex at a very early stage of infection. Post-translationally, ADP-ribosylated. The ADP-ribosylation is retained in the virion during infection. In terms of processing, phosphorylated on serine and threonine residues.

It localises to the virion. Its subcellular location is the host endoplasmic reticulum-Golgi intermediate compartment. It is found in the host Golgi apparatus. In terms of biological role, packages the positive strand viral genome RNA into a helical ribonucleocapsid (RNP) and plays a fundamental role during virion assembly through its interactions with the viral genome and membrane protein M. Plays an important role in enhancing the efficiency of subgenomic viral RNA transcription as well as viral replication. The chain is Nucleoprotein from Bovine coronavirus (strain LSU-94LSS-051) (BCoV-LSU).